Consider the following 253-residue polypeptide: Ubiquinone/menaquinone biosynthesis C-methyltransferase UbiE (253 aa).

Residues threonine 76, aspartate 97, and 125–126 each bind S-adenosyl-L-methionine; that span reads NA.

This sequence belongs to the class I-like SAM-binding methyltransferase superfamily. MenG/UbiE family.

The catalysed reaction is a 2-demethylmenaquinol + S-adenosyl-L-methionine = a menaquinol + S-adenosyl-L-homocysteine + H(+). The enzyme catalyses a 2-methoxy-6-(all-trans-polyprenyl)benzene-1,4-diol + S-adenosyl-L-methionine = a 5-methoxy-2-methyl-3-(all-trans-polyprenyl)benzene-1,4-diol + S-adenosyl-L-homocysteine + H(+). It participates in quinol/quinone metabolism; menaquinone biosynthesis; menaquinol from 1,4-dihydroxy-2-naphthoate: step 2/2. It functions in the pathway cofactor biosynthesis; ubiquinone biosynthesis. In terms of biological role, methyltransferase required for the conversion of demethylmenaquinol (DMKH2) to menaquinol (MKH2) and the conversion of 2-polyprenyl-6-methoxy-1,4-benzoquinol (DDMQH2) to 2-polyprenyl-3-methyl-6-methoxy-1,4-benzoquinol (DMQH2). In Nitrobacter hamburgensis (strain DSM 10229 / NCIMB 13809 / X14), this protein is Ubiquinone/menaquinone biosynthesis C-methyltransferase UbiE.